Reading from the N-terminus, the 492-residue chain is GMP reductase (492 aa).

Residues 30–31 (SR) and Arg78 each bind NADP(+). CBS domains are found at residues 99-162 (LIED…LVET) and 164-223 (MTPV…RNAT). NADP(+) contacts are provided by residues 260–262 (DIA) and 313–314 (VG). Residues Gly314, Gly316, and Cys319 each coordinate K(+). The active-site Thioimidate intermediate is the Cys319. The Proton donor/acceptor role is filled by Thr321. Residue Arg322 coordinates K(+). Residues 352–354 (DGG), 375–376 (GN), and 401–403 (GMA) each bind GMP. Residues Met402 and 454–457 (SGIS) contribute to the NADP(+) site. Residues 490 to 492 (SKL) carry the Microbody targeting signal motif.

It belongs to the IMPDH/GMPR family. GuaC type 1 subfamily. Homotetramer.

The protein resides in the glycosome. The catalysed reaction is IMP + NH4(+) + NADP(+) = GMP + NADPH + 2 H(+). Activated by GTP and inhibited by XMP and the IMP analogs allopurinol nucleotide and thiopurinol nucleotide. Its function is as follows. Catalyzes the irreversible NADPH-dependent deamination of GMP to IMP. It functions in the conversion of nucleobase, nucleoside and nucleotide derivatives of G to A nucleotides, and in maintaining the intracellular balance of A and G nucleotides. The chain is GMP reductase from Leishmania donovani.